Here is a 954-residue protein sequence, read N- to C-terminus: E3 ubiquitin-protein ligase arkadia (954 aa).

Residues 50–66 (LCSDTNKQQRDLNSNGT) are compositionally biased toward polar residues. 2 disordered regions span residues 50–175 (LCSD…VSSL) and 193–276 (RKRF…SGGM). Composition is skewed to low complexity over residues 112-131 (SSFS…GDSD) and 232-251 (SSSS…SSST). Residues 280-284 (VVVIE) carry the SUMO interaction motif 1 (SIM) motif. Positions 305-311 (EVEIVTV) match the SUMO interaction motif 2 (SIM) motif. 3 disordered regions span residues 318-346 (RTTL…RNRV), 364-452 (TVDE…MPRL), and 485-509 (HFPH…SFRD). The span at 328–337 (WGQNTQSGRT) shows a compositional bias: polar residues. The SUMO interaction motif 3 (SIM) signature appears at 360–364 (VVDLT). Positions 385–395 (VSTVSSNTSTS) are enriched in low complexity. Residues 485 to 496 (HFPHHHHHHHQS) are compositionally biased toward basic residues. Residues 867–869 (YPH) form a ubiquitin binding region. Zn(2+) contacts are provided by Cys902 and Cys905. An RING-type; atypical zinc finger spans residues 902–943 (CTICLSILEEGEDVRRLPCMHLFHQVCVDQWLITNKKCPICR). Residues 917–921 (RLPCM) are ubiquitin binding. 2 residues coordinate Zn(2+): His925 and Cys928.

It belongs to the Arkadia family. As to quaternary structure, monomer.

The protein resides in the nucleus. It localises to the cytoplasm. It is found in the PML body. It carries out the reaction S-ubiquitinyl-[E2 ubiquitin-conjugating enzyme]-L-cysteine + [acceptor protein]-L-lysine = [E2 ubiquitin-conjugating enzyme]-L-cysteine + N(6)-ubiquitinyl-[acceptor protein]-L-lysine.. The protein operates within protein modification; protein ubiquitination. Its activity is regulated as follows. Binds free ubiquitin non-covalently via its RING-type zinc finger. Ubiquitin-binding leads to enhance the E3 ubiquitin-protein ligase activity by stabilizing the ubiquitin-conjugating enzyme E2 (donor ubiquitin) in the 'closed' conformation and activating ubiquitin transfer. Its function is as follows. E3 ubiquitin-protein ligase required for mesoderm patterning during embryonic development. Acts as an enhancer of the transcriptional responses of the smad2/smad3 effectors, which are activated downstream of BMP. Acts by mediating ubiquitination and degradation of SMAD inhibitors such as smad7, inducing their proteasomal degradation and thereby enhancing the transcriptional activity of TGF-beta and BMP. Specifically binds polysumoylated chains via SUMO interaction motifs (SIMs) and mediates ubiquitination of sumoylated substrates. The regulation of the BMP-SMAD signaling is however independent of sumoylation and is not dependent of SUMO interaction motifs (SIMs). This Xenopus tropicalis (Western clawed frog) protein is E3 ubiquitin-protein ligase arkadia (rnf111).